The chain runs to 185 residues: MATTTTPRLKTKYREEIAGKLREEFSYENVMQIPGLVKIVVNMGVGDAARDSKLIEGAIRDLTTITGQKPAVTKARKSIAQFKLREGQPIGAHVTLRGDRMWEFLDRTLSLALPRIRDFRGLSPKQFDGRGNYTFGLTEQVMFHEIDQDKIDRTRGMDITVVTTATNDAEGRALLRHLGFPFKEA.

This sequence belongs to the universal ribosomal protein uL5 family. In terms of assembly, part of the 50S ribosomal subunit; part of the 5S rRNA/L5/L18/L25 subcomplex. Contacts the 5S rRNA and the P site tRNA. Forms a bridge to the 30S subunit in the 70S ribosome.

This is one of the proteins that bind and probably mediate the attachment of the 5S RNA into the large ribosomal subunit, where it forms part of the central protuberance. In the 70S ribosome it contacts protein S13 of the 30S subunit (bridge B1b), connecting the 2 subunits; this bridge is implicated in subunit movement. Contacts the P site tRNA; the 5S rRNA and some of its associated proteins might help stabilize positioning of ribosome-bound tRNAs. The polypeptide is Large ribosomal subunit protein uL5 (Streptomyces coelicolor (strain ATCC BAA-471 / A3(2) / M145)).